The following is a 217-amino-acid chain: Ribulose-phosphate 3-epimerase (217 aa).

Ser-6 provides a ligand contact to substrate. Positions 29, 31, and 62 each coordinate a divalent metal cation. The active-site Proton acceptor is the Asp-31. Substrate contacts are provided by residues His-62, Gly-138–Gly-141, Asp-171–Gly-173, and Gly-193–Ser-194. Asp-171 is a binding site for a divalent metal cation. Asp-171 (proton donor) is an active-site residue.

It belongs to the ribulose-phosphate 3-epimerase family. The cofactor is a divalent metal cation.

The catalysed reaction is D-ribulose 5-phosphate = D-xylulose 5-phosphate. It participates in carbohydrate degradation. Catalyzes the reversible epimerization of D-ribulose 5-phosphate to D-xylulose 5-phosphate. The sequence is that of Ribulose-phosphate 3-epimerase from Helicobacter pylori (strain J99 / ATCC 700824) (Campylobacter pylori J99).